The sequence spans 75 residues: MNKLAILAIIAMVLFSANAFRFQSRLRSNVEAKTGDACEQAAIQCVESACESLCTEGEDRTGCYMYIYSNCPPYV.

An N-terminal signal peptide occupies residues 1-19; it reads MNKLAILAIIAMVLFSANA. Positions 20–35 are excised as a propeptide; that stretch reads FRFQSRLRSNVEAKTG. Disulfide bonds link Cys-38–Cys-54, Cys-45–Cys-71, and Cys-50–Cys-63.

In terms of assembly, homodimer.

The protein resides in the secreted. Its subcellular location is the cell membrane. In terms of biological role, mating ciliate pheromones (or gamones) are diffusible extracellular communication signals that distinguish different intraspecific classes of cells commonly referred to as 'mating types'. They prepare the latter for conjugation by changing their cell surface properties. The membrane-bound form promotes inter-cellular communication and adhesion for mating pair formation and may act as binding site for the secreted form. The protein is Mating pheromone Er-1/Er-3 (MAT1) of Euplotes raikovi.